A 376-amino-acid chain; its full sequence is MYG1 exonuclease (376 aa).

Residues 1 to 47 (MGHRFLRGLLTLLLPPPPLYTRHRMLGPESVPPPKRSRSKLMAPPRI) constitute a mitochondrion transit peptide. Serine 120 bears the Phosphoserine mark. 2 positions are modified to N6-acetyllysine: lysine 267 and lysine 273.

It belongs to the MYG1 family. In terms of tissue distribution, ubiquitously expressed, with highest levels in testis.

The protein localises to the nucleus. It localises to the nucleoplasm. Its subcellular location is the mitochondrion matrix. It is found in the nucleolus. In terms of biological role, 3'-5' RNA exonuclease which cleaves in situ on specific transcripts in both nucleus and mitochondrion. Involved in regulating spatially segregated organellar RNA processing, acts as a coordinator of nucleo-mitochondrial crosstalk. In nucleolus, processes pre-ribosomal RNA involved in ribosome assembly and alters cytoplasmic translation. In mitochondrial matrix, processes 3'-termini of the mito-ribosomal and messenger RNAs and controls translation of mitochondrial proteins. The polypeptide is MYG1 exonuclease (Homo sapiens (Human)).